We begin with the raw amino-acid sequence, 314 residues long: Mycothiol acetyltransferase (314 aa).

Residue glutamate 39 participates in 1D-myo-inositol 2-(L-cysteinylamino)-2-deoxy-alpha-D-glucopyranoside binding. Acetyl-CoA is bound at residue 80-82 (LTA). An N-acetyltransferase domain is found at 159-313 (FVCRRFDPIS…PTGELGHEPP (155 aa)). 3 residues coordinate 1D-myo-inositol 2-(L-cysteinylamino)-2-deoxy-alpha-D-glucopyranoside: glutamate 186, lysine 228, and glutamate 237. Acetyl-CoA contacts are provided by residues 241 to 243 (LGV) and 248 to 254 (QGQGVGR). Residue tyrosine 275 coordinates 1D-myo-inositol 2-(L-cysteinylamino)-2-deoxy-alpha-D-glucopyranoside.

It belongs to the acetyltransferase family. MshD subfamily. In terms of assembly, monomer.

The enzyme catalyses 1D-myo-inositol 2-(L-cysteinylamino)-2-deoxy-alpha-D-glucopyranoside + acetyl-CoA = mycothiol + CoA + H(+). Catalyzes the transfer of acetyl from acetyl-CoA to desacetylmycothiol (Cys-GlcN-Ins) to form mycothiol. The protein is Mycothiol acetyltransferase of Jonesia denitrificans (strain ATCC 14870 / DSM 20603 / BCRC 15368 / CIP 55.134 / JCM 11481 / NBRC 15587 / NCTC 10816 / Prevot 55134) (Listeria denitrificans).